A 115-amino-acid chain; its full sequence is Large ribosomal subunit protein eL36 (115 aa).

The protein belongs to the eukaryotic ribosomal protein eL36 family. In terms of assembly, component of the large ribosomal subunit.

It localises to the cytoplasm. The protein resides in the cytosol. Component of the large ribosomal subunit. This Drosophila melanogaster (Fruit fly) protein is Large ribosomal subunit protein eL36 (RpL36).